A 359-amino-acid chain; its full sequence is Protein Wnt-5a (359 aa).

The first 20 residues, 1–20 (MATTHLTAALALLCALLQVD), serve as a signal peptide directing secretion. The cysteines at positions 83 and 94 are disulfide-linked. 2 N-linked (GlcNAc...) asparagine glycosylation sites follow: Asn-93 and Asn-99. 10 disulfide bridges follow: Cys-133–Cys-141, Cys-143–Cys-161, Cys-217–Cys-231, Cys-219–Cys-226, Cys-288–Cys-319, Cys-304–Cys-314, Cys-318–Cys-358, Cys-334–Cys-349, Cys-336–Cys-346, and Cys-341–Cys-342. Ser-223 carries the O-palmitoleoyl serine; by PORCN lipid modification. Asn-291 and Asn-305 each carry an N-linked (GlcNAc...) asparagine glycan.

The protein belongs to the Wnt family. Post-translationally, palmitoleoylation is required for efficient binding to frizzled receptors. Depalmitoleoylation leads to Wnt signaling pathway inhibition. Neuroectodermal and non-neuroectodermal tissues.

Its subcellular location is the secreted. It localises to the extracellular space. The protein resides in the extracellular matrix. Ligand for members of the frizzled family of seven transmembrane receptors. Can activate or inhibit canonical Wnt signaling, depending on receptor context. Required during embryogenesis for extension of the primary anterior-posterior axis. This Ambystoma mexicanum (Axolotl) protein is Protein Wnt-5a (WNT-5A).